The sequence spans 383 residues: MRRTFTAEEKASVFELWKNGTGFSEIANILGSKPGTIFTMLRDTGGIKPHERKRAVAHLTLSEREEIRAGLSAKMSIRAIATALNRSPSTISREVQRNRGRRYYKAVDANNRANRMAKRPKPCLLDQNLPLRKLVLEKLEMKWSPEQISGWLRRTKPRQKTLRISPETIYKTLYFRSREALHHLNIQHLRRSHSLRHGRRHTRKGERGTINIVNGTPIHERSRNIDNRRSLGHWEGDLVSGTKNSHIATLVDRKSRYTIIVRLRGKDSVSVNQALTDKFLSLPSELRKSLTWDRGMELARHLEFTVSTGVKVYFCDPQSPWQRGTNENTNGLIRQYFPKKTCLAQYTQHELDLVAAQLNNRPRKTLKFKTPKEIIERGVALTD.

Positions 213–379 (VNGTPIHERS…TPKEIIERGV (167 aa)) constitute an Integrase catalytic domain.

Belongs to the transposase IS30 family.

Functionally, required for the transposition of the insertion element. The sequence is that of Transposase InsI for insertion sequence element IS30A (insI1) from Escherichia coli (strain K12).